Consider the following 876-residue polypeptide: MSGLTLGGGSGRVRPTQAAAAFPTSHDFADPDRSSVARNANRPSRRFAAPPQLSDDFSLESPTDSAQVHDNLLQDALFPEWKANSPRGVDSPDEMQKKDPLATQIWKLYSRTKAQLPNQERMENLTWRMMALSLRRQERERAQQQARASSQKSPVPGMSGIAQLRLSDRVSNTPTTTADTVSDAMNLDDFIIPFSPSDHPSPSTTKASEATTGAIPIKARRDQSASEATPVPASFPHPAQDQRRESEFGYVPRRVRKTSIDERQFFNLQIPSRKRPAESSPHVPPVSTSMLAHDPDFSHAVPEYTLDTSHGLSLQNQMNAQQLANAQNHTSPNMAFALDTFNLGDDPILPSAGPYQQQFTFSPSESPMTSGNPFANLYAQTPIASSLNSTDFFSPPPSGYQSTASTPQPAYDGEHSKYFDMPVDARSQRRVVPAYITQRSSNLSASLQPRYMYNQGGSSQDITQQNAHMGAQSSSMQSPGFSIPQHVDPTQVLNPNEFNGNHAAMFSFGADSDVEDDDGNQFSAGGLAMPAEFGDDSISDMNSNMAWETSYPNSFQSLPAFAAQHRKHVTIGSADMMDTPSEWNQGGSLGRTHESAASVSEVRNRDQDPRRQKIARTSSTPNTAQLLRQSMQNQSSHTSPNTPPESGLNSAAPSRPASPGGTKNGEQNGPTTCTNCFTQTTPLWRRNPEGQPLCNACGLFLKLHGVVRPLSLKTDVIKKRNRNSANSLAVGSSRVSKKSARKNSVQQVTPTAPTSSRAQSNTTSESPPAMPGSSGRGSGVVPIAAAPPKSSSAATTSPGTNNGCGAVQVAPKRQRRLEKASDVDMAESPSSTSSGGRSKVVPLAPAMPPAAVNPANHSIAAGQGASQEWEWLTMSL.

Residues 1–11 (MSGLTLGGGSG) are compositionally biased toward gly residues. Disordered regions lie at residues 1–65 (MSGL…PTDS), 137–159 (QERERAQQQARASSQKSPVPGMS), 192–248 (IPFS…ESEF), 393–413 (FSPPPSGYQSTASTPQPAYDG), 451–498 (YMYN…PNEF), and 573–672 (SADM…GPTT). Polar residues-rich tracts occupy residues 198–211 (DHPSPSTTKASEAT), 399–408 (GYQSTASTPQ), and 455–480 (QGGSSQDITQQNAHMGAQSSSMQSPG). Basic and acidic residues predominate over residues 602-611 (VRNRDQDPRR). The segment covering 615–640 (ARTSSTPNTAQLLRQSMQNQSSHTSP) has biased composition (polar residues). Residues 673–697 (CTNCFTQTTPLWRRNPEGQPLCNAC) form a GATA-type zinc finger. A DNA-binding region (H-T-H motif) is located at residues 721–742 (NRNSANSLAVGSSRVSKKSARK). 2 stretches are compositionally biased toward polar residues: residues 724–734 (SANSLAVGSSR) and 742–766 (KNSVQQVTPTAPTSSRAQSNTTSES). The disordered stretch occupies residues 724–856 (SANSLAVGSS…MPPAAVNPAN (133 aa)). Low complexity-rich tracts occupy residues 782 to 798 (PIAAAPPKSSSAATTSP) and 828 to 855 (SPSSTSSGGRSKVVPLAPAMPPAAVNPA).

As to quaternary structure, interacts with nmrA.

It localises to the nucleus. In terms of biological role, transcription activator that binds the consensus DNA element 5'-CGATAG-3' and mediates nitrogen metabolite repression. Activates the transcription of uapA. This chain is Nitrogen regulatory protein areA (areA), found in Emericella nidulans (strain FGSC A4 / ATCC 38163 / CBS 112.46 / NRRL 194 / M139) (Aspergillus nidulans).